The chain runs to 107 residues: Large ribosomal subunit protein uL24 (107 aa).

The protein belongs to the universal ribosomal protein uL24 family. Part of the 50S ribosomal subunit.

One of two assembly initiator proteins, it binds directly to the 5'-end of the 23S rRNA, where it nucleates assembly of the 50S subunit. Functionally, one of the proteins that surrounds the polypeptide exit tunnel on the outside of the subunit. The protein is Large ribosomal subunit protein uL24 of Streptomyces avermitilis (strain ATCC 31267 / DSM 46492 / JCM 5070 / NBRC 14893 / NCIMB 12804 / NRRL 8165 / MA-4680).